The following is a 181-amino-acid chain: CD160 antigen (181 aa).

Residues 1-24 (MLLEPGRGCCALAILLAIVDIQSG) form the signal peptide. Residues 25 to 133 (GCINITSSAS…QGHFFSILFT (109 aa)) form the Ig-like V-type domain. An N-linked (GlcNAc...) asparagine glycan is attached at Asn28. 2 disulfides stabilise this stretch: Cys44–Cys112 and Cys61–Cys68. Asn137 carries an N-linked (GlcNAc...) asparagine glycan. A lipid anchor (GPI-anchor amidated serine) is attached at Ser159. A propeptide spans 160 to 181 (SGFLQEKVWVMLVTSLVALQAL) (removed in mature form).

As to quaternary structure, homomultimer; disulfide-linked. Interacts with HLA-G. Interacts with HLA-A2-B2M in complex with an HIV-derived peptide. Interacts with TNFRSF14 (via cysteine-rich domain 1); this interaction is direct. Interacts with LCK and CD247/CD3 zeta chain. Expression is restricted to functional NK and cytotoxic T lymphocytes. Expressed in viral-specific effector memory and terminally differentiated effector memory CD8+ T cells. Expressed in memory and activated CD4+ T cell subsets (at protein level). Expressed at high levels in intraepithelial lymphocytes (at protein level). Expressed in both alpha-beta and gamma-delta CD8+ T cell subsets (at protein level). Expressed in umbilical vein endothelial cells (at protein level). Expressed in monocytes and at lower levels in B cells. Isoform 3: Expressed exclusively in activated NK cells (at protein level).

The protein resides in the cell membrane. It is found in the secreted. Functionally, receptor on immune cells capable to deliver stimulatory or inhibitory signals that regulate cell activation and differentiation. Exists as a GPI-anchored and as a transmembrane form, each likely initiating distinct signaling pathways via phosphoinositol 3-kinase in activated NK cells and via LCK and CD247/CD3 zeta chain in activated T cells. Receptor for both classical and non-classical MHC class I molecules. In the context of acute viral infection, recognizes HLA-C and triggers NK cell cytotoxic activity, likely playing a role in anti-viral innate immune response. On CD8+ T cells, binds HLA-A2-B2M in complex with a viral peptide and provides a costimulatory signal to activated/memory T cells. Upon persistent antigen stimulation, such as occurs during chronic viral infection, may progressively inhibit TCR signaling in memory CD8+ T cells, contributing to T cell exhaustion. On endothelial cells, recognizes HLA-G and controls angiogenesis in immune privileged sites. Receptor or ligand for TNF superfamily member TNFRSF14, participating in bidirectional cell-cell contact signaling between antigen presenting cells and lymphocytes. Upon ligation of TNFRSF14, provides stimulatory signal to NK cells enhancing IFNG production and anti-tumor immune response. On activated CD4+ T cells, interacts with TNFRSF14 and down-regulates CD28 costimulatory signaling, restricting memory and alloantigen-specific immune response. In the context of bacterial infection, acts as a ligand for TNFRSF14 on epithelial cells, triggering the production of antimicrobial proteins and pro-inflammatory cytokines. In terms of biological role, the soluble GPI-cleaved form, usually released by activated lymphocytes, might play an immune regulatory role by limiting lymphocyte effector functions. The protein is CD160 antigen of Homo sapiens (Human).